We begin with the raw amino-acid sequence, 258 residues long: uncharacterized protein (258 aa).

A run of 3 helical transmembrane segments spans residues 38-58 (VFGL…LFIA), 72-92 (ALIF…IIFI), and 111-131 (FLVI…MLWW).

Its subcellular location is the cell membrane. This is an uncharacterized protein from Mycoplasma pneumoniae (strain ATCC 29342 / M129 / Subtype 1) (Mycoplasmoides pneumoniae).